The sequence spans 114 residues: uncharacterized protein (114 aa).

A run of 2 helical transmembrane segments spans residues 9-29 and 75-95; these read LAIF…SFWL and LVHF…VAII.

The protein localises to the cell membrane. This is an uncharacterized protein from Mycoplasma pneumoniae (strain ATCC 29342 / M129 / Subtype 1) (Mycoplasmoides pneumoniae).